The sequence spans 268 residues: Putative type I specificity subunit S.MpnORF365P (268 aa).

Belongs to the type-I restriction system S methylase family. As to quaternary structure, the methyltransferase is composed of M and S polypeptides.

Functionally, the specificity (S) subunit of a type I methyltransferase (MTase); this subunit dictates DNA sequence specificity. The single R subunit has multiple frameshifts and is probably not expressed. This Mycoplasma pneumoniae (strain ATCC 29342 / M129 / Subtype 1) (Mycoplasmoides pneumoniae) protein is Putative type I specificity subunit S.MpnORF365P.